A 129-amino-acid polypeptide reads, in one-letter code: NADPH-dependent 7-cyano-7-deazaguanine reductase (129 aa).

C34 serves as the catalytic Thioimide intermediate. D41 acts as the Proton donor in catalysis. Substrate-binding positions include 56–58 and 75–76; these read VEL and HE.

Belongs to the GTP cyclohydrolase I family. QueF type 1 subfamily.

It is found in the cytoplasm. The enzyme catalyses 7-aminomethyl-7-carbaguanine + 2 NADP(+) = 7-cyano-7-deazaguanine + 2 NADPH + 3 H(+). It functions in the pathway tRNA modification; tRNA-queuosine biosynthesis. In terms of biological role, catalyzes the NADPH-dependent reduction of 7-cyano-7-deazaguanine (preQ0) to 7-aminomethyl-7-deazaguanine (preQ1). This Nitrosococcus oceani (strain ATCC 19707 / BCRC 17464 / JCM 30415 / NCIMB 11848 / C-107) protein is NADPH-dependent 7-cyano-7-deazaguanine reductase.